Consider the following 360-residue polypeptide: NAD(P)H-quinone oxidoreductase subunit 1, chloroplastic (360 aa).

Transmembrane regions (helical) follow at residues 27-47, 98-118, 129-149, 165-185, 203-223, 248-268, 269-289, 297-317, and 340-360; these read IWIFVPIFSLVLGIITGVLVI, FSIGPSIAVISILLSYSVIPF, IGIFLWIAISSIAPIGLLMSG, AAQSISYEIPLTLCVLSISLL, FWGWNLWRQPIGFIIFLISSL, YSGIKFGLFYVASYLNLLISS, LFVTVLYLGGWNISIPYISIL, IFGTTIGIFITLAKTYLFLFI, and FLLPISLGNLLLTTSFQLFSL.

The protein belongs to the complex I subunit 1 family. NDH is composed of at least 16 different subunits, 5 of which are encoded in the nucleus.

Its subcellular location is the plastid. The protein localises to the chloroplast thylakoid membrane. It carries out the reaction a plastoquinone + NADH + (n+1) H(+)(in) = a plastoquinol + NAD(+) + n H(+)(out). It catalyses the reaction a plastoquinone + NADPH + (n+1) H(+)(in) = a plastoquinol + NADP(+) + n H(+)(out). Its function is as follows. NDH shuttles electrons from NAD(P)H:plastoquinone, via FMN and iron-sulfur (Fe-S) centers, to quinones in the photosynthetic chain and possibly in a chloroplast respiratory chain. The immediate electron acceptor for the enzyme in this species is believed to be plastoquinone. Couples the redox reaction to proton translocation, and thus conserves the redox energy in a proton gradient. The polypeptide is NAD(P)H-quinone oxidoreductase subunit 1, chloroplastic (Lepidium virginicum (Virginia pepperweed)).